A 599-amino-acid polypeptide reads, in one-letter code: Elongation factor 4 (599 aa).

Positions lysine 3 to serine 185 constitute a tr-type G domain. GTP-binding positions include aspartate 15–threonine 20 and asparagine 132–aspartate 135.

It belongs to the TRAFAC class translation factor GTPase superfamily. Classic translation factor GTPase family. LepA subfamily.

Its subcellular location is the cell membrane. It carries out the reaction GTP + H2O = GDP + phosphate + H(+). Its function is as follows. Required for accurate and efficient protein synthesis under certain stress conditions. May act as a fidelity factor of the translation reaction, by catalyzing a one-codon backward translocation of tRNAs on improperly translocated ribosomes. Back-translocation proceeds from a post-translocation (POST) complex to a pre-translocation (PRE) complex, thus giving elongation factor G a second chance to translocate the tRNAs correctly. Binds to ribosomes in a GTP-dependent manner. The chain is Elongation factor 4 from Syntrophomonas wolfei subsp. wolfei (strain DSM 2245B / Goettingen).